A 353-amino-acid chain; its full sequence is WD repeat-containing protein 55 (353 aa).

WD repeat units follow at residues 4–43, 49–88, 92–130, 133–172, 175–214, 218–257, and 260–299; these read DLGA…SLVR, AHKE…QVAH, AHED…CSHE, AHED…VQSQ, FSED…DCSD, DLAP…IIQP, and SHDY…EGSN. The segment at 300–353 is disordered; that stretch reads VNSGNASGAAEDSDSDNDGMDLDNDPSKSSKGSKRKTKSKANTLNATNNFFADL. A compositionally biased stretch (acidic residues) spans 310–323; that stretch reads EDSDSDNDGMDLDN. A compositionally biased stretch (low complexity) spans 339 to 353; it reads KANTLNATNNFFADL.

It belongs to the WD repeat WDR55 family. In terms of assembly, interacts with DDB1A. As to expression, highly expressed in roots. Expressed in cotyledons, leaves, buds and flowers.

Its subcellular location is the nucleus. It localises to the cytoplasm. Functionally, required for male and female gametogenesis, seed development, and embryo and endosperm development at early stages. Involved in the establishment of bilateral symmetry in the transition from the globular to the heart embryo stage. May act in the frame of a CRL4 complex. Required for proper vegetative growth and organization of the adult plant body. May play a role in hormonal control of plant development. This chain is WD repeat-containing protein 55, found in Arabidopsis thaliana (Mouse-ear cress).